The primary structure comprises 226 residues: N-(5'-phosphoribosyl)anthranilate isomerase (226 aa).

The protein belongs to the TrpF family.

The catalysed reaction is N-(5-phospho-beta-D-ribosyl)anthranilate = 1-(2-carboxyphenylamino)-1-deoxy-D-ribulose 5-phosphate. It participates in amino-acid biosynthesis; L-tryptophan biosynthesis; L-tryptophan from chorismate: step 3/5. This is N-(5'-phosphoribosyl)anthranilate isomerase (TRP1) from Saccharomyces kudriavzevii (strain ATCC MYA-4449 / AS 2.2408 / CBS 8840 / NBRC 1802 / NCYC 2889) (Yeast).